The chain runs to 295 residues: Secreted frizzled-related protein 2 (295 aa).

The N-terminal stretch at 1 to 24 is a signal peptide; it reads MLQGPGSLLLLFLASHCCLGSARG. The FZ domain maps to 35–155; the sequence is YKRSNCKPIP…PQDNDLCIPL (121 aa). 8 disulfides stabilise this stretch: Cys40-Cys103, Cys50-Cys96, Cys87-Cys125, Cys114-Cys152, Cys118-Cys142, Cys172-Cys245, Cys175-Cys247, and Cys190-Cys295. One can recognise an NTR domain in the interval 172–295; it reads CEACKNKNDD…ISRSIRKLQC (124 aa).

This sequence belongs to the secreted frizzled-related protein (sFRP) family. As to expression, expressed in adipose tissue, heart, brain, skeletal muscle, pancreas, thymus, prostate, testis, ovary, small intestine and colon. Highest levels in adipose tissue, small intestine and colon.

The protein resides in the secreted. Functionally, soluble frizzled-related proteins (sFRPS) function as modulators of Wnt signaling through direct interaction with Wnts. They have a role in regulating cell growth and differentiation in specific cell types. SFRP2 may be important for eye retinal development and for myogenesis. This Homo sapiens (Human) protein is Secreted frizzled-related protein 2 (SFRP2).